A 496-amino-acid polypeptide reads, in one-letter code: Aminoacetaldehyde dehydrogenase (496 aa).

NADH is bound by residues leucine 166, tryptophan 168, lysine 192, serine 246, threonine 249, and tyrosine 256. Glutamate 268 (proton acceptor) is an active-site residue. Cysteine 269 is an NADH binding site. Cysteine 303 (nucleophile) is an active-site residue. Residues lysine 353 and glutamate 398 each coordinate NADH.

It belongs to the aldehyde dehydrogenase family. In terms of assembly, homotetramer, formed by two symmetrical dimers.

The catalysed reaction is aminoacetaldehyde + NAD(+) + H2O = glycine + NADH + 2 H(+). It catalyses the reaction 3-aminopropanal + NAD(+) + H2O = beta-alanine + NADH + 2 H(+). Its function is as follows. NAD(+)-dependent aminoaldehyde dehydrogenase highly efficient with protonated aminoacetaldehyde (ACTAL) and 3-aminopropanaldehyde (APAL). Likely participates in a still uncharacterized metabolic pathway present in proteobacteria species, in which ACTAL might be an intermediate, yielding glycine. Highly prefers NAD(+) over NADP(+). Shows very poor activity with acetaldehyde, propanaldehyde, butanaldehyde, pentanaldehyde, dimethylaminoacetaldehyde, trimethylaminoacetaldehyde (betaine aldehyde), trimethylaminobutanaldehyde, short aliphatic hydroxyaldehydes such as 3-hydroxypropanaldehyde and 2-hydroxypropanaldehyde (lactaldehyde), and aromatic aldehydes. The polypeptide is Aminoacetaldehyde dehydrogenase (Pseudomonas aeruginosa (strain ATCC 15692 / DSM 22644 / CIP 104116 / JCM 14847 / LMG 12228 / 1C / PRS 101 / PAO1)).